The following is a 215-amino-acid chain: Flavin-dependent thymidylate synthase (215 aa).

The ThyX domain maps to Met-1 to Trp-215. FAD is bound by residues Ser-56, Arg-79–Arg-81, and Glu-87. Residues Gln-76–Arg-79, Glu-87–Arg-91, and Arg-155 each bind dUMP. The ThyX motif motif lies at Arg-79 to Ser-89. FAD is bound at residue His-177. Residue Arg-182 participates in dUMP binding. The Involved in ionization of N3 of dUMP, leading to its activation role is filled by Arg-182.

Belongs to the thymidylate synthase ThyX family. As to quaternary structure, homotetramer. The cofactor is FAD.

The enzyme catalyses dUMP + (6R)-5,10-methylene-5,6,7,8-tetrahydrofolate + NADPH + H(+) = dTMP + (6S)-5,6,7,8-tetrahydrofolate + NADP(+). Its pathway is pyrimidine metabolism; dTTP biosynthesis. In terms of biological role, catalyzes the reductive methylation of 2'-deoxyuridine-5'-monophosphate (dUMP) to 2'-deoxythymidine-5'-monophosphate (dTMP) while utilizing 5,10-methylenetetrahydrofolate (mTHF) as the methyl donor, and NADPH and FADH(2) as the reductant. The sequence is that of Flavin-dependent thymidylate synthase from Synechocystis sp. (strain ATCC 27184 / PCC 6803 / Kazusa).